We begin with the raw amino-acid sequence, 262 residues long: Thiazole synthase (262 aa).

Catalysis depends on Lys95, which acts as the Schiff-base intermediate with DXP. Residues Gly156, 182–183 (AG), and 204–205 (NT) contribute to the 1-deoxy-D-xylulose 5-phosphate site.

It belongs to the ThiG family. In terms of assembly, homotetramer. Forms heterodimers with either ThiH or ThiS.

The protein resides in the cytoplasm. The catalysed reaction is [ThiS sulfur-carrier protein]-C-terminal-Gly-aminoethanethioate + 2-iminoacetate + 1-deoxy-D-xylulose 5-phosphate = [ThiS sulfur-carrier protein]-C-terminal Gly-Gly + 2-[(2R,5Z)-2-carboxy-4-methylthiazol-5(2H)-ylidene]ethyl phosphate + 2 H2O + H(+). The protein operates within cofactor biosynthesis; thiamine diphosphate biosynthesis. Catalyzes the rearrangement of 1-deoxy-D-xylulose 5-phosphate (DXP) to produce the thiazole phosphate moiety of thiamine. Sulfur is provided by the thiocarboxylate moiety of the carrier protein ThiS. In vitro, sulfur can be provided by H(2)S. This chain is Thiazole synthase, found in Yersinia enterocolitica serotype O:8 / biotype 1B (strain NCTC 13174 / 8081).